The following is a 1438-amino-acid chain: MNELTKFTNQLAKPETFDQIQIGIASPERIRSWSFGEIKKPETINYRTFKPERDGLFCARIFGPVKDYECLCGKYKRMKYKGVVCEKCGVEVTVTKVRRERMGHIELAAPVAHIWFLKSLPSRIGLLLDMQLKQLERVLYFEHYIVTEPGLTPLEKFQLLTEDELLEAQDEYGEDAFSAGIGAEAVKFMLMDLDLEQEKEDLLEELATTKSKLKPAKIIKRLKVVESFIESGNRPEWMILEVVPVIPPELRPLVPLDGGRFATSDLNDLYRRVINRNNRLKRLIELRAPDIIVRNEKRMLQESVDALFDNGRRGRVITGANKRPLKSLSDMLKGKQGRFRQNLLGKRVDYSGRSVIVTGPELKLHQCGLPKKMALELFKPFIYARLDAKGLSMTLKQAKKWVEKERKEVWDILDEVIREHPVLLNRAPTLHRLGIQAFEPVLIEGKAIQLHPLVCSAFNADFDGDQMAVHVPLSLEAQLEARVLMMSTNNILSPANGKPIIVPSQDMVLGLYYLSMERQEKTPEYIEEKDGTKIEKLPRFADMAEVHQALETKSVTLHTRIIARVPQADEDGKPEMKRFVTTPGRMLIGECLPKNHKVPYDIVNRLLTKKEIGDVIDQVYRHTGQKDTVLFADAIMVLGFRHAFKAGISFGKDDMIIPDSKEGMIEDTKKQVADYEQQYQDGLITQQEKYNKVIDAWSRCGDQVAEAMMDEIKSQKFDKDGKESEINSIYMMSHSGARGSPAQMKQLAGMRGLMAKPSGEIIENPIISNFKEGLTVLEYFNSTHGARKGLADTALKTANSGYLTRRLVDVSQDCVIVEEDCKTDNALEMRAIVQGGSVIASLGERILGRTLVDDLVNAKTDEVIVKAGTLLDEPMVKAIEEAEVQVARIRSPLVCEADQGVCATCYGRDLARGTPVNIGEAVGVIAAQSIGEPGTQLTMRTFHIGGAAQLNETSHLESISDGKVEYRDMPTITDKKGRILSLARNGELAVIDAEGREREIHKVPYGTVLMHKDGAKVKEGDRLAEWDPFSLPIITEQSGVVKYQDLIEGTTLEEQTDDATGIAQRVVTENRATGRKKKEDLRPRLTLLSEGQSEDETEAQRYLLAPGTTLSVTDGQTVEAGDILARASREAAKTRDITGGLPRVAELFEARVPKDNAVIAKISGKIEFVREYKAKRKIAIVPEEGEAVDYLIPKTKVIDVQEGDFVKKGDTLISGSPNPHDILDVLGVEALAEYLCTEIQEVYRLQGVKINDKHIEVIVRQMLQKVEITDGGDTVLLPGEQVDRDEMDEANAKLGRGKKPATGNPVLLGITKASLQTRSFISAASFQETTRVLTQASVEGKKDTLIGLKENVIVGRLIPAGTGAGMNRMRVTASARDAALRAQWKKQQEKLAAADEAAMAAEKEPEAEVMDADAMAAAMGGDSAGGDTKPEAPEASEE.

Residues C70, C72, C85, and C88 each coordinate Zn(2+). The Mg(2+) site is built by D461, D463, and D465. Positions 821, 895, 902, and 905 each coordinate Zn(2+). The segment covering 1413–1427 has biased composition (low complexity); it reads DAMAAAMGGDSAGGD. The segment at 1413 to 1438 is disordered; the sequence is DAMAAAMGGDSAGGDTKPEAPEASEE.

The protein belongs to the RNA polymerase beta' chain family. The RNAP catalytic core consists of 2 alpha, 1 beta, 1 beta' and 1 omega subunit. When a sigma factor is associated with the core the holoenzyme is formed, which can initiate transcription. Requires Mg(2+) as cofactor. Zn(2+) serves as cofactor.

It carries out the reaction RNA(n) + a ribonucleoside 5'-triphosphate = RNA(n+1) + diphosphate. Functionally, DNA-dependent RNA polymerase catalyzes the transcription of DNA into RNA using the four ribonucleoside triphosphates as substrates. In Erythrobacter litoralis (strain HTCC2594), this protein is DNA-directed RNA polymerase subunit beta'.